We begin with the raw amino-acid sequence, 163 residues long: Cyclic pyranopterin monophosphate synthase (163 aa).

Substrate contacts are provided by residues 75–77 (LCH) and 115–116 (ME). The active site involves aspartate 130.

Belongs to the MoaC family. Homohexamer; trimer of dimers.

The catalysed reaction is (8S)-3',8-cyclo-7,8-dihydroguanosine 5'-triphosphate = cyclic pyranopterin phosphate + diphosphate. It functions in the pathway cofactor biosynthesis; molybdopterin biosynthesis. Functionally, catalyzes the conversion of (8S)-3',8-cyclo-7,8-dihydroguanosine 5'-triphosphate to cyclic pyranopterin monophosphate (cPMP). In Variovorax paradoxus (strain S110), this protein is Cyclic pyranopterin monophosphate synthase.